Consider the following 252-residue polypeptide: Short chain dehydrogenase andC (252 aa).

A signal peptide spans 1 to 25 (MGFLQDKVVIITGAAAGIGLATATA). Residues Ile11, Asp57, and Arg119 each contribute to the NADP(+) site. Ser137 (proton donor) is an active-site residue. 2 residues coordinate NADP(+): Tyr151 and Lys155. Catalysis depends on Tyr151, which acts as the Proton acceptor. Lys155 serves as the catalytic Lowers pKa of active site Tyr.

It belongs to the short-chain dehydrogenases/reductases (SDR) family.

The protein operates within secondary metabolite biosynthesis; terpenoid biosynthesis. Functionally, short chain dehydrogenase; part of the gene cluster that mediates the biosynthesis of anditomin, a fungal meroterpenoid. The first step of the pathway is the synthesis of 3,5-dimethylorsellinic acid (DMOA) by the polyketide synthase andM. DMOA is then converted to the phthalide compound 5,7-dihydroxy-4,6-dimethylphthalide (DHDMP) by the cytochrome P450 monooxygenase andK, which is further prenylated by the prenyltransferase andD to yield farnesyl-DHDMP. Further epoxidation by the FAD-dependent monooxygenase andE leads to epoxyfarnesyl-DHDMP. The next step involves the terpene cyclase andB that converts epoxyfarnesyl-DHDMP into preandiloid A through opening of the epoxide ring followed by the cyclization of the farnesyl moiety. Preandiloid A is in turn oxidized at the C-3 hydroxyl group to yield preandiloid B by the dehydrogenase andC. The dioxygenase andA is solely responsible for the dehydrogenation of preandiloid B leading to the enone preandiloid C, as well as for the intriguing structural rearrangement to generate the bicyclo[2.2.2]octane core, transforming preandiloid C into andiconin. FAD-binding monooxygenase andJ then produces andilesin D which is reduced by dehydrogenase andI to yield andilesin A. Action of acetyltransferase andG followed by a spontaneous acetate elimination leads then to andilesin B, which is in turn substrate of the short chain dehydrogenase andH to yield andilesin C. Finally, the dioxygenase andF catalyzes the transformation of andilesin C to anditomin. This chain is Short chain dehydrogenase andC, found in Emericella variicolor (Aspergillus stellatus).